Consider the following 339-residue polypeptide: Annexin A2 (339 aa).

N-acetylserine is present on S2. The tract at residues 2–24 (STVHEILCKLSLEGDHSTPPSAY) is S100A10-binding site. Y24 is subject to Phosphotyrosine; by SRC. S26 is subject to Phosphoserine; by PKC. Annexin repeat units follow at residues 33-104 (FDAE…GLLK) and 105-176 (TPAQ…ALAK). The residue at position 49 (K49) is an N6-acetyllysine; alternate. A Glycyl lysine isopeptide (Lys-Gly) (interchain with G-Cter in SUMO1); alternate cross-link involves residue K49. K49 is covalently cross-linked (Glycyl lysine isopeptide (Lys-Gly) (interchain with G-Cter in SUMO2); alternate). K152 carries the N6-acetyllysine modification. At S184 the chain carries Phosphoserine. 2 Annexin repeats span residues 189 to 261 (ELID…NLVQ) and 265 to 336 (NKPL…YLCG). The residue at position 199 (Y199) is a Phosphotyrosine. Position 227 is an N6-acetyllysine (K227).

This sequence belongs to the annexin family. As to quaternary structure, heterotetramer containing 2 light chains of S100A10/p11 and 2 heavy chains of ANXA2/p36. Interacts with ATP1B1. Interacts with DYSF. Interacts with COCH. Interacts (via repeat Annexin 1) with PCSK9 (via the C-terminal domain); the interaction inhibits the degradation of LDLR. Interacts with CEACAM1 (via the cytoplasmic domain); this interaction is regulated by phosphorylation of CEACAM1. Interacts with APPL2 and APPL1; targets APPL2 to endosomes and acting in parallel to RAB5A. Interacts with S100A4. May interact with UBAP2. In terms of processing, ISGylated. Expressed strongly in velvet antler reserve mesenchyme.

It localises to the secreted. The protein localises to the extracellular space. Its subcellular location is the extracellular matrix. It is found in the basement membrane. Calcium-regulated membrane-binding protein whose affinity for calcium is greatly enhanced by anionic phospholipids. It binds two calcium ions with high affinity. May be involved in heat-stress response. Inhibits PCSK9-enhanced LDLR degradation, probably reduces PCSK9 protein levels via a translational mechanism but also competes with LDLR for binding with PCSK9. Binds to endosomes damaged by phagocytosis of particulate wear debris and participates in endosomal membrane stabilization, thereby limiting NLRP3 inflammasome activation. Required for endothelial cell surface plasmin generation and may support fibrinolytic surveillance and neoangiogenesis. In Cervus elaphus (Red deer), this protein is Annexin A2 (ANXA2).